The primary structure comprises 529 residues: Bifunctional purine biosynthesis protein PurH (529 aa).

Residues 1-148 (MQQRRPVRRA…KNHKDVAIVV (148 aa)) form the MGS-like domain.

It belongs to the PurH family.

The enzyme catalyses (6R)-10-formyltetrahydrofolate + 5-amino-1-(5-phospho-beta-D-ribosyl)imidazole-4-carboxamide = 5-formamido-1-(5-phospho-D-ribosyl)imidazole-4-carboxamide + (6S)-5,6,7,8-tetrahydrofolate. The catalysed reaction is IMP + H2O = 5-formamido-1-(5-phospho-D-ribosyl)imidazole-4-carboxamide. It functions in the pathway purine metabolism; IMP biosynthesis via de novo pathway; 5-formamido-1-(5-phospho-D-ribosyl)imidazole-4-carboxamide from 5-amino-1-(5-phospho-D-ribosyl)imidazole-4-carboxamide (10-formyl THF route): step 1/1. The protein operates within purine metabolism; IMP biosynthesis via de novo pathway; IMP from 5-formamido-1-(5-phospho-D-ribosyl)imidazole-4-carboxamide: step 1/1. The chain is Bifunctional purine biosynthesis protein PurH from Salmonella paratyphi B (strain ATCC BAA-1250 / SPB7).